We begin with the raw amino-acid sequence, 622 residues long: WD repeat-containing protein 46 (622 aa).

The tract at residues 1-135 (METAPKPGRG…KTQSKLEKAE (135 aa)) is disordered. At Ser41 the chain carries Phosphoserine. Residues 106–118 (EEARKFCRIDKSK) are compositionally biased toward basic and acidic residues. 5 WD repeats span residues 192–233 (LRQF…CEIN), 234–271 (VMEA…LHCI), 314–353 (VRAG…PLAK), 356–395 (CHRG…QPLS), and 398–435 (TLPQ…SPPS). Residues 547–622 (AAFQPKAKQK…AREGGLQVDP (76 aa)) form a disordered region. Residues 571–582 (VMDQEHRDKVRQ) show a composition bias toward basic and acidic residues.

In terms of assembly, part of the small subunit (SSU) processome, composed of more than 70 proteins and the RNA chaperone small nucleolar RNA (snoRNA) U3. Interacts with DDX21, NCL, NOP2 and EBNA1BP2.

The protein localises to the nucleus. Its subcellular location is the nucleolus. In terms of biological role, scaffold component of the nucleolar structure. Required for localization of DDX21 and NCL to the granular compartment of the nucleolus. Part of the small subunit (SSU) processome, first precursor of the small eukaryotic ribosomal subunit. During the assembly of the SSU processome in the nucleolus, many ribosome biogenesis factors, an RNA chaperone and ribosomal proteins associate with the nascent pre-rRNA and work in concert to generate RNA folding, modifications, rearrangements and cleavage as well as targeted degradation of pre-ribosomal RNA by the RNA exosome. The sequence is that of WD repeat-containing protein 46 (Wdr46) from Mus musculus (Mouse).